The primary structure comprises 232 residues: 2,3,4,5-tetrahydropyridine-2,6-dicarboxylate N-acetyltransferase (232 aa).

The protein belongs to the transferase hexapeptide repeat family. DapH subfamily.

The enzyme catalyses (S)-2,3,4,5-tetrahydrodipicolinate + acetyl-CoA + H2O = L-2-acetamido-6-oxoheptanedioate + CoA. Its pathway is amino-acid biosynthesis; L-lysine biosynthesis via DAP pathway; LL-2,6-diaminopimelate from (S)-tetrahydrodipicolinate (acetylase route): step 1/3. Its function is as follows. Catalyzes the transfer of an acetyl group from acetyl-CoA to tetrahydrodipicolinate. In Streptococcus mutans serotype c (strain ATCC 700610 / UA159), this protein is 2,3,4,5-tetrahydropyridine-2,6-dicarboxylate N-acetyltransferase.